A 502-amino-acid polypeptide reads, in one-letter code: Probable glycine dehydrogenase (decarboxylating) subunit 2 (502 aa).

Position 273 is an N6-(pyridoxal phosphate)lysine (Lys-273).

Belongs to the GcvP family. C-terminal subunit subfamily. The glycine cleavage system is composed of four proteins: P, T, L and H. In this organism, the P 'protein' is a heterodimer of two subunits. The cofactor is pyridoxal 5'-phosphate.

It carries out the reaction N(6)-[(R)-lipoyl]-L-lysyl-[glycine-cleavage complex H protein] + glycine + H(+) = N(6)-[(R)-S(8)-aminomethyldihydrolipoyl]-L-lysyl-[glycine-cleavage complex H protein] + CO2. The glycine cleavage system catalyzes the degradation of glycine. The P protein binds the alpha-amino group of glycine through its pyridoxal phosphate cofactor; CO(2) is released and the remaining methylamine moiety is then transferred to the lipoamide cofactor of the H protein. This is Probable glycine dehydrogenase (decarboxylating) subunit 2 from Thermococcus gammatolerans (strain DSM 15229 / JCM 11827 / EJ3).